The primary structure comprises 217 residues: ATP-dependent Clp protease proteolytic subunit (217 aa).

Serine 121 functions as the Nucleophile in the catalytic mechanism. Histidine 146 is an active-site residue.

This sequence belongs to the peptidase S14 family. As to quaternary structure, fourteen ClpP subunits assemble into 2 heptameric rings which stack back to back to give a disk-like structure with a central cavity, resembling the structure of eukaryotic proteasomes.

It is found in the cytoplasm. The catalysed reaction is Hydrolysis of proteins to small peptides in the presence of ATP and magnesium. alpha-casein is the usual test substrate. In the absence of ATP, only oligopeptides shorter than five residues are hydrolyzed (such as succinyl-Leu-Tyr-|-NHMec, and Leu-Tyr-Leu-|-Tyr-Trp, in which cleavage of the -Tyr-|-Leu- and -Tyr-|-Trp bonds also occurs).. Functionally, cleaves peptides in various proteins in a process that requires ATP hydrolysis. Has a chymotrypsin-like activity. Plays a major role in the degradation of misfolded proteins. This chain is ATP-dependent Clp protease proteolytic subunit, found in Burkholderia cenocepacia (strain HI2424).